Here is a 331-residue protein sequence, read N- to C-terminus: UAP56-interacting factor (331 aa).

The UAP56-binding motif signature appears at 16–34 (APDKVDMSLDDIIRLNKKE). 3 disordered regions span residues 30–51 (LNKKEQQARRPSPGNRRPLQKG), 63–99 (RARGQTQRGGGVPRGAITRAGVGRGRKIPPPVGRRRG), and 158–193 (GQRRPYRQTDIQRGLNSTRPFQQRRRPLPPVQTQRE). Positions 166 to 175 (TDIQRGLNST) are enriched in polar residues.

The protein belongs to the UIF family.

It localises to the nucleus. Its subcellular location is the nucleoplasm. It is found in the nucleus speckle. Its function is as follows. Required for mRNA export from the nucleus to the cytoplasm. Acts as an adapter that uses the ddx39b/uap56-nfx1 pathway to ensure efficient mRNA export and delivering to the nuclear pore. This is UAP56-interacting factor (fyttd1) from Salmo salar (Atlantic salmon).